The following is a 165-amino-acid chain: Short form salivary protein D7R4 (165 aa).

The signal sequence occupies residues 1–21 (MIRQVITSYFLTVCLLALVQG). Disulfide bonds link cysteine 27-cysteine 59, cysteine 40-cysteine 165, and cysteine 98-cysteine 117. Positions 28 and 43 each coordinate noradrenaline. Glutamate 28 contacts serotonin. Positions 56, 115, 132, and 135 each coordinate serotonin. Histamine contacts are provided by tyrosine 115, aspartate 132, and glutamate 135. Residues tyrosine 115, aspartate 132, and glutamate 135 each coordinate tryptamine. 2 residues coordinate noradrenaline: aspartate 132 and glutamate 135.

It belongs to the PBP/GOBP family. As to expression, female saliva (at protein level). Female salivary gland. Not detected in female carcass without salivary glands. Not detected in male tissues.

It localises to the secreted. In terms of biological role, modulates blood feeding of female mosquitoes on vertebrate species by binding and sequestering different mediators involved in the host response. Binds serotonin, noradrenaline, histamine and tryptamine. Inhibits histamine-, serotonin- and partially noradrenaline-induced smooth muscle contraction. Exhibits vasodilating activity. This is Short form salivary protein D7R4 from Anopheles gambiae (African malaria mosquito).